The chain runs to 520 residues: Tetratricopeptide repeat protein 6 (520 aa).

TPR repeat units follow at residues 57-90 (MTMCALLAKVQMKAKRTKEAVEVLKKALDAISHS), 101-138 (ADCLYNLGLCYMEEGNLQMTYKLAITDLTTAISMDKNS), 139-172 (YTAFYNRALCYTKIRELQMALTDYGIVLLLDATE), 176-209 (LNTFLNRGLIYVELGQYGFALEDFKQAALISRTN), 210-243 (GSLCHATAMCHHRINEFEEAVNFFTWALKINPCF), 245-280 (DAYVGRGNSYMEYGHDEATKQAQKDFLKALHINPAY), 281-314 (IKARISFGYNLQAQGKFQKAWNHFTIAIDTDPKN), 320-347 (GRAVVCLQMGNNFAAMQDINAAMKISTT), 348-381 (AEFLTNRGVIHEFMGHKQNAMKDYQDAITLNPKY), 382-415 (SLAYFNAGNIYFHHRQFSQASDYFSKALKFDPEN), 416-449 (EYVLMNRAITNTILKKYEEAKEDFANVIESCPFW), 450-483 (AAVYFNRAHFYYCLKQYELAEEDLNKALSLKPND), and 484-517 (ALVYNFRAKVRGKIGLIEEAMADYNQALDLEDYA).

The protein is Tetratricopeptide repeat protein 6 of Homo sapiens (Human).